A 397-amino-acid polypeptide reads, in one-letter code: Presenilin-like protein At2g29900 (397 aa).

At Met-1–Glu-17 the chain is on the cytoplasmic side. The chain crosses the membrane as a helical span at residues Leu-18 to Ile-38. Over Leu-39–Asn-76 the chain is Lumenal. The helical transmembrane segment at Ser-77 to Leu-97 threads the bilayer. The Cytoplasmic portion of the chain corresponds to Arg-98 to Tyr-106. A helical transmembrane segment spans residues Met-107–Ile-127. Residues Asp-128–Asp-135 lie on the Lumenal side of the membrane. The chain crosses the membrane as a helical span at residues Ser-136–Met-156. Residues Ser-157 to Lys-158 lie on the Cytoplasmic side of the membrane. Residues Phe-159–Phe-179 form a helical membrane-spanning segment. The Lumenal segment spans residues Thr-180 to Trp-188. The chain crosses the membrane as a helical span at residues Val-189 to Leu-209. Asp-198 is a catalytic residue. The Cytoplasmic portion of the chain corresponds to Arg-210 to Gly-305. Residues Leu-306 to Val-326 traverse the membrane as a helical segment. Residue Asp-318 is part of the active site. The Lumenal segment spans residues Gly-327–Thr-336. A helical membrane pass occupies residues Val-337 to Val-357. Over Tyr-358–Pro-366 the chain is Cytoplasmic. Positions Pro-363–Leu-365 match the PAL motif. Positions Val-367–Val-387 form an intramembrane region, helical. At Val-388–Phe-397 the chain is on the cytoplasmic side.

Belongs to the peptidase A22A family. In terms of assembly, homodimer. Probable component of the gamma-secretase complex, a complex composed of a presenilin homodimer, nicastrin, APH1 and PEN2.

Its subcellular location is the endoplasmic reticulum membrane. It is found in the golgi apparatus membrane. Its function is as follows. Probable subunit of the gamma-secretase complex, an endoprotease complex that catalyzes the intramembrane cleavage of integral membrane proteins such as Notch receptors. The polypeptide is Presenilin-like protein At2g29900 (Arabidopsis thaliana (Mouse-ear cress)).